A 325-amino-acid polypeptide reads, in one-letter code: Lipoyl synthase (325 aa).

The [4Fe-4S] cluster site is built by C66, C71, C77, C92, C96, C99, and S303. The Radical SAM core domain occupies 78-292; it reads WEDREATFLI…AQFAEGLGFA (215 aa).

It belongs to the radical SAM superfamily. Lipoyl synthase family. [4Fe-4S] cluster serves as cofactor.

Its subcellular location is the cytoplasm. It catalyses the reaction [[Fe-S] cluster scaffold protein carrying a second [4Fe-4S](2+) cluster] + N(6)-octanoyl-L-lysyl-[protein] + 2 oxidized [2Fe-2S]-[ferredoxin] + 2 S-adenosyl-L-methionine + 4 H(+) = [[Fe-S] cluster scaffold protein] + N(6)-[(R)-dihydrolipoyl]-L-lysyl-[protein] + 4 Fe(3+) + 2 hydrogen sulfide + 2 5'-deoxyadenosine + 2 L-methionine + 2 reduced [2Fe-2S]-[ferredoxin]. It functions in the pathway protein modification; protein lipoylation via endogenous pathway; protein N(6)-(lipoyl)lysine from octanoyl-[acyl-carrier-protein]: step 2/2. In terms of biological role, catalyzes the radical-mediated insertion of two sulfur atoms into the C-6 and C-8 positions of the octanoyl moiety bound to the lipoyl domains of lipoate-dependent enzymes, thereby converting the octanoylated domains into lipoylated derivatives. The protein is Lipoyl synthase of Mycobacterium sp. (strain JLS).